The chain runs to 174 residues: Adenylate kinase (174 aa).

Residues 12 to 41 (STGDMLRAAIKAGTPLGLEAKKIIDEGGLV) are NMP. Residues Thr-13, Arg-18, 39–41 (GLV), 67–70 (GFPR), and Gln-74 contribute to the AMP site. The tract at residues 104–141 (GRRVHLASGRTYHIAYNPPKVEGKDDVTGEDLIQRDDD) is LID. ATP is bound by residues Arg-105 and 114-115 (TY). Residues Arg-138 and Arg-149 each contribute to the AMP site.

It belongs to the adenylate kinase family. As to quaternary structure, monomer.

It localises to the cytoplasm. It catalyses the reaction AMP + ATP = 2 ADP. It functions in the pathway purine metabolism; AMP biosynthesis via salvage pathway; AMP from ADP: step 1/1. Its function is as follows. Catalyzes the reversible transfer of the terminal phosphate group between ATP and AMP. Plays an important role in cellular energy homeostasis and in adenine nucleotide metabolism. This chain is Adenylate kinase, found in Neisseria animalis.